Here is a 340-residue protein sequence, read N- to C-terminus: tRNA-dihydrouridine(20/20a) synthase (340 aa).

FMN-binding positions include 22 to 24 (PMM) and Gln75. Residue Cys105 is the Proton donor of the active site. FMN is bound by residues Lys144, His177, 217 to 219 (NGG), and 239 to 240 (GR).

It belongs to the Dus family. DusA subfamily. FMN serves as cofactor.

The catalysed reaction is 5,6-dihydrouridine(20) in tRNA + NADP(+) = uridine(20) in tRNA + NADPH + H(+). The enzyme catalyses 5,6-dihydrouridine(20) in tRNA + NAD(+) = uridine(20) in tRNA + NADH + H(+). It catalyses the reaction 5,6-dihydrouridine(20a) in tRNA + NADP(+) = uridine(20a) in tRNA + NADPH + H(+). It carries out the reaction 5,6-dihydrouridine(20a) in tRNA + NAD(+) = uridine(20a) in tRNA + NADH + H(+). Catalyzes the synthesis of 5,6-dihydrouridine (D), a modified base found in the D-loop of most tRNAs, via the reduction of the C5-C6 double bond in target uridines. Specifically modifies U20 and U20a in tRNAs. The chain is tRNA-dihydrouridine(20/20a) synthase from Xylella fastidiosa (strain 9a5c).